A 252-amino-acid polypeptide reads, in one-letter code: CLAVATA3/ESR (CLE)-related protein 4A-1 (252 aa).

The first 21 residues, 1–21, serve as a signal peptide directing secretion; it reads MAKNAMLCLLILRVVLALAFA. Positions 21-83 are required for secretion from the host cytoplasm to the host apoplasm; it reads ATNKKGDEEP…SNQLPNNNWM (63 aa). N-linked (GlcNAc...) asparagine glycosylation occurs at Asn32. The tract at residues 116 to 252 is disordered; sequence RKTGMHSQRH…APAGPDPIHH (137 aa). 2 stretches are compositionally biased toward basic and acidic residues: residues 125 to 137 and 144 to 242; these read HHEE…EKRV and PIHH…EKRG. The stretch at 127 to 135 is one A-1 repeat; sequence EETTLEQEK. The segment at 127-219 is 6 X approximate repeat A; sequence EETTLEQEKR…HEETTLEQEK (93 aa). Residues 136-147 form a CLE-1 repeat; sequence RVAGAGPDPIHH. The 6 X approximate repeat CLE stretch occupies residues 136-252; the sequence is RVAGAGPDPI…APAGPDPIHH (117 aa). The stretch at 148–156 is one A-2 repeat; it reads QDTTLEQEK. One copy of the CLE-2 repeat lies at 157 to 168; that stretch reads RAVPAGPDPKHH. Residues 169-177 form an A-3 repeat; the sequence is EETTLEQEK. The CLE-3 repeat unit spans residues 178 to 189; the sequence is RAVPAGPDPKHH. An A-4 repeat occupies 190–198; that stretch reads EETTLEQEK. One copy of the CLE-4 repeat lies at 199–210; the sequence is RAVPAGPDPKHH. The stretch at 211 to 219 is one A-5 repeat; sequence EETTLEQEK. The CLE-5 repeat unit spans residues 220-231; it reads RAVPAGPDPKHH. Residues 232–240 form an A-6 repeat; the sequence is EETTFEQEK. One copy of the CLE-6 repeat lies at 241–252; sequence RGAPAGPDPIHH.

The protein belongs to the CLV3/ESR signal peptide family. Highly expressed exclusively within the dorsal esophageal gland cell during syncytium formation in host plants.

It is found in the secreted. The protein resides in the host cytoplasm. It localises to the host extracellular space. The protein localises to the extracellular space. Its subcellular location is the apoplast. Mimics host plant CLE extracellular signal peptides that regulate cell fate. May play a role in the differentiation or division of feeding cells (syncytia) induced in plant roots during infection. The sequence is that of CLAVATA3/ESR (CLE)-related protein 4A-1 (CLE-4A-1) from Globodera rostochiensis (Golden nematode worm).